The chain runs to 24 residues: Brevinin-1Pa (24 aa).

The cysteines at positions 18 and 24 are disulfide-linked.

In terms of tissue distribution, expressed by the skin glands.

The protein localises to the secreted. Antibacterial activity against Gram-positive bacterium S.aureus and Gram-negative bacterium E.coli. Has activity against C.albicans. The chain is Brevinin-1Pa from Lithobates pipiens (Northern leopard frog).